Here is a 553-residue protein sequence, read N- to C-terminus: MRSDIIKEGPERAPNRSLLKATGVTDSEMRKPFIAVVNSWNDIIPGHIHLNKLAEAVKAGIRNAGGVPFEFHTIGVCDGIAMGHEGMKYSLPSREVIEDTIELMVKAHQFDGIVLIPTCDKIVPGHLMAAGRLDIPAIVVTGGPMLPGYVDDKYTDLISVFEGVGAYSTGKLSERDLKRLENLSCGGAGSCAGMFTANTMACVTEALGLSLPGCATAHAVDAKKARIAKESGERIVEMVKENLTPRKIVTFKSFENAIMVDMAVGGSTNTTLHLPALAHEFGLNLPLEKFDELSRETPHLISLRPGGPNFMLHFDRAGGVQAVMQRLSSKLHLDQLTVNGKTIGENLNEFEIINPKLNKEIIATLEKPIHAEGGIAVLKGNLAPNGSVVKQAAVDPKMRVHTGPAKVYDCEEDAMENILAGNVKPGDIVVIRYEGPKGGPGMREMLAATAAIGGMGLLESVALVTDGRFSGGTRGPCIGHISPEASEGGPIALVKDGDMIEINIPERVLNLKVSEEELEQRKAAFVPPKKEVTGYLARYQRSVHSANTGGIVD.

Asp78 is a Mg(2+) binding site. Cys119 is a [2Fe-2S] cluster binding site. Mg(2+) is bound by residues Asp120 and Lys121. Lys121 is modified (N6-carboxylysine). A [2Fe-2S] cluster-binding site is contributed by Cys191. Glu444 lines the Mg(2+) pocket. The Proton acceptor role is filled by Ser470.

Belongs to the IlvD/Edd family. As to quaternary structure, homodimer. [2Fe-2S] cluster is required as a cofactor. Requires Mg(2+) as cofactor.

It catalyses the reaction (2R)-2,3-dihydroxy-3-methylbutanoate = 3-methyl-2-oxobutanoate + H2O. The catalysed reaction is (2R,3R)-2,3-dihydroxy-3-methylpentanoate = (S)-3-methyl-2-oxopentanoate + H2O. It functions in the pathway amino-acid biosynthesis; L-isoleucine biosynthesis; L-isoleucine from 2-oxobutanoate: step 3/4. It participates in amino-acid biosynthesis; L-valine biosynthesis; L-valine from pyruvate: step 3/4. In terms of biological role, functions in the biosynthesis of branched-chain amino acids. Catalyzes the dehydration of (2R,3R)-2,3-dihydroxy-3-methylpentanoate (2,3-dihydroxy-3-methylvalerate) into 2-oxo-3-methylpentanoate (2-oxo-3-methylvalerate) and of (2R)-2,3-dihydroxy-3-methylbutanoate (2,3-dihydroxyisovalerate) into 2-oxo-3-methylbutanoate (2-oxoisovalerate), the penultimate precursor to L-isoleucine and L-valine, respectively. The chain is Dihydroxy-acid dehydratase from Methanosarcina barkeri (strain Fusaro / DSM 804).